The following is a 266-amino-acid chain: Sesquipedalian-1 (266 aa).

The PH domain occupies 17-113; the sequence is PVDNAGFLYK…WVKALSRASF (97 aa). The disordered stretch occupies residues 165 to 184; that stretch reads QPSVAPQRPPPLPPRRRASA. The residue at position 183 (serine 183) is a Phosphoserine. A F&amp;H motif is present at residues 191-203; it reads SFAQLHARYGLEV.

This sequence belongs to the sesquipedalian family. Forms homodimers and heterodimers with PHETA2. Interacts with OCRL and INPP5B. Interaction with OCRL may be important for endosomal morphology and function.

It localises to the early endosome. The protein localises to the recycling endosome. Its subcellular location is the golgi apparatus. It is found in the trans-Golgi network. The protein resides in the cytoplasmic vesicle. It localises to the clathrin-coated vesicle. Its function is as follows. Plays a role in endocytic trafficking. Required for receptor recycling from endosomes, both to the trans-Golgi network and the plasma membrane. The chain is Sesquipedalian-1 from Mus musculus (Mouse).